Consider the following 305-residue polypeptide: MVDKLTHLKQLEAESIHIIREVAAEFDNPVMLYSIGKDSAVMLHLARKAFFPGKLPFPVMHVDTRWKFQEMYTFRDKMVEELGLDLITHVNPDGVAQGINPFTHGSAKHTDIMKTEGLKQALDKHGFDAAFGGARRDEEKSRAKERVYSFRDSKHRWDPKNQRPELWNVYNGNVNKGESIRVFPLSNWTELDIWQYIYLEGIPIVPLYFAAERDVIEKNGTLIMIDDDRILEHLSDEDKARIVKKKVRFRTLGCYPLTGAVESEAETLTDIIQEMLLTRTSERQGRVIDHDGAGSMEDKKRQGYF.

This sequence belongs to the PAPS reductase family. CysD subfamily. As to quaternary structure, heterodimer composed of CysD, the smaller subunit, and CysN.

The catalysed reaction is sulfate + ATP + H(+) = adenosine 5'-phosphosulfate + diphosphate. Its pathway is sulfur metabolism; hydrogen sulfide biosynthesis; sulfite from sulfate: step 1/3. Its function is as follows. With CysN forms the ATP sulfurylase (ATPS) that catalyzes the adenylation of sulfate producing adenosine 5'-phosphosulfate (APS) and diphosphate, the first enzymatic step in sulfur assimilation pathway. APS synthesis involves the formation of a high-energy phosphoric-sulfuric acid anhydride bond driven by GTP hydrolysis by CysN coupled to ATP hydrolysis by CysD. In Pseudomonas fluorescens (strain SBW25), this protein is Sulfate adenylyltransferase subunit 2.